Reading from the N-terminus, the 1040-residue chain is Exosome RNA helicase MTR4 (1040 aa).

Ala2 is subject to N-acetylalanine. Residues 16 to 77 form a disordered region; the sequence is DSTSAAGAKK…GTDEPIFGKK (62 aa). The span at 23 to 33 shows a compositional bias: basic and acidic residues; it reads AKKDKEKEKWK. Lys24 is covalently cross-linked (Glycyl lysine isopeptide (Lys-Gly) (interchain with G-Cter in SUMO2)). Ser38 bears the Phosphoserine mark. The segment covering 41-50 has biased composition (basic and acidic residues); sequence KAGKRLDTKL. Lys49 and Lys76 each carry N6-acetyllysine. ATP contacts are provided by residues Ile137, 159 to 166, Ser162, Gly164, Lys165, and Thr166; that span reads AHTSAGKT. In terms of domain architecture, Helicase ATP-binding spans 146–302; the sequence is IQCVDNNQSV…WICHLHKQPC (157 aa). Residues 250-253 carry the DEIH box motif; that stretch reads DEIH. Residue Lys356 forms a Glycyl lysine isopeptide (Lys-Gly) (interchain with G-Cter in SUMO2) linkage. The Helicase C-terminal domain maps to 403–575; that stretch reads QMTKLDFNTD…NMVLNLLRVE (173 aa). Residues Lys682 and Lys721 each participate in a glycyl lysine isopeptide (Lys-Gly) (interchain with G-Cter in SUMO2) cross-link.

The protein belongs to the helicase family. SKI2 subfamily. In terms of assembly, component of a TRAMP-like complex, an ATP-dependent exosome regulatory complex consisting of a helicase (MTREX), an oligadenylate polymerase (TENT4B or TENT4A), and a substrate specific RNA-binding factor (ZCCHC7 or ZCCHC8). Several TRAMP-like complexes exist with specific compositions and are associated with nuclear, or nucleolar RNA exosomes. Identified in the spliceosome C complex. Component of the poly(A) tail exosome targeting (PAXT) complex made of PABPN1, ZFC3H1 and MTREX that directs a subset of long and polyadenylated poly(A) RNAs for exosomal degradation. Component of the nuclear exosome targeting (NEXT) complex composed of MTREX, ZCCHC8, and RBM7 that directs a subset of non-coding short-lived RNAs for exosomal degradation. Interacts with ZCCHC8; this interaction bridges the interaction between RBM7 and MTREX. Binds to ZFC3H1 and RBM7 in a RNase-insensitive manner. Interacts with EXOSC10; the interaction mediates the association of MTREX with nuclear RNA exosomes. Interacts with isoform 1 of NVL in an ATP-dependent manner; the interaction is required to associate NVL with nuclear RNA exosome. Interacts with WDR74; the interaction dissociation in a late stage of rRNA synthesis is required for appropriate maturation of pre-60S particles and depends on the ATPase activity of NVL. Interacts with MPHOSPH6. Interacts with the RNA cap-binding complex proteins NCBP1 and SRRT. Interacts with NRDE2; the interaction is direct and negatively regulates MTREX function in exosomal degradation by changing its conformation precluding interaction with ZFC3H1, the RNA cap-binding complex proteins NCBP1 and SRRT, and association with the exosome. Associates with the RNA exosome complex.

It is found in the nucleus. Its subcellular location is the nucleoplasm. The protein resides in the nucleolus. It localises to the nucleus speckle. The catalysed reaction is ATP + H2O = ADP + phosphate + H(+). Activated when MTREX is incorporated into NEXT complex an the nuclear RNA exosome complex. Functionally, catalyzes the ATP-dependent unwinding of RNA duplexes with a single-stranded 3' RNA extension. Central subunit of many protein complexes, namely TRAMP-like, nuclear exosome targeting (NEXT) and poly(A) tail exosome targeting (PAXT). NEXT functions as an RNA exosome cofactor that directs a subset of non-coding short-lived RNAs for exosomal degradation. NEXT is involved in surveillance and turnover of aberrant transcripts and non-coding RNAs. PAXT directs a subset of long and polyadenylated poly(A) RNAs for exosomal degradation. The RNA exosome is fundamental for the degradation of RNA in eukaryotic nuclei. Substrate targeting is facilitated by its cofactor ZCCHC8, which links to RNA-binding protein adapters. Associated with the RNA exosome complex and involved in the 3'-processing of the 7S pre-RNA to the mature 5.8S rRNA. May be involved in pre-mRNA splicing. In the context of NEXT complex can also in vitro unwind DNA:RNA heteroduplexes with a 3' poly (A) RNA tracking strand. Can promote unwinding and degradation of structured RNA substrates when associated with the nuclear exosome and its cofactors. Can displace a DNA strand while translocating on RNA to ultimately degrade the RNA within a DNA/RNA heteroduplex. Plays a role in DNA damage response. The protein is Exosome RNA helicase MTR4 of Mus musculus (Mouse).